Reading from the N-terminus, the 155-residue chain is Transcriptional repressor NrdR (155 aa).

Residues Cys-3–Cys-34 fold into a zinc finger. Positions Leu-49–Asp-139 constitute an ATP-cone domain.

This sequence belongs to the NrdR family. It depends on Zn(2+) as a cofactor.

Negatively regulates transcription of bacterial ribonucleotide reductase nrd genes and operons by binding to NrdR-boxes. The polypeptide is Transcriptional repressor NrdR (Dinoroseobacter shibae (strain DSM 16493 / NCIMB 14021 / DFL 12)).